We begin with the raw amino-acid sequence, 151 residues long: High mobility group B protein 14 (151 aa).

2 disordered regions span residues 1–62 (MTKR…QTKM) and 132–151 (TKRMESGAHDESETDSDYSE). The segment covering 7–20 (KSGPLSPSCSGGSS) has biased composition (low complexity). Basic residues predominate over residues 35–56 (RSTRLRLQPLRKPKTSPKKKPV). The segment at residues 63–132 (PKKPATAFFF…EFHRAMTEYT (70 aa)) is a DNA-binding region (HMG box). Residues 132–142 (TKRMESGAHDE) are compositionally biased toward basic and acidic residues. Serine 150 carries the post-translational modification Phosphoserine.

It belongs to the HMGB family.

The protein localises to the nucleus. This is High mobility group B protein 14 (HMGB14) from Arabidopsis thaliana (Mouse-ear cress).